A 467-amino-acid polypeptide reads, in one-letter code: Transcription factor fos-1 (467 aa).

Residues 1–22 (MFEQPSSTTNTTTSSGSGSDSN) are compositionally biased toward low complexity. Disordered stretches follow at residues 1 to 38 (MFEQ…QAHP) and 139 to 179 (QYST…AAAR). One can recognise a bZIP domain in the interval 163–226 (DDKRLKRRQR…NSLKNYLETH (64 aa)). Positions 165–205 (KRLKRRQRNKEAAARCRQRRIDLMKELQDQVNDFKNSNDKK) are basic motif. Residues 212–219 (IRNKLNSL) form a leucine-zipper region. 2 disordered regions span residues 266–291 (RADS…PVED) and 395–467 (QPIT…LRPL). The span at 273-286 (SIRSGHSSSSSEQH) shows a compositional bias: low complexity. A compositionally biased stretch (polar residues) spans 434–454 (SSNTGLTPSGQPTMNFVSTPT). A phosphothreonine mark is found at Thr-440, Thr-452, and Thr-454.

This sequence belongs to the bZIP family. Fos subfamily. As to quaternary structure, homodimer. Heterodimer; with jun-1. Interacts with kgb-1 and hda-1. May be phosphorylated by kgb-1. Phosphorylation at Thr-440 increases sensitivity to heavy metal stress. Phosphorylation inhibits homodimer formation, and promotes association with target promoters. Expressed in anchor cells. Isoform a is expressed in somatic gonad cells that neighbor anchor cells. Isoform b is expressed in vulval cells, the uterine cells that neighbor anchor cells and the spermatheca.

The protein localises to the nucleus. Functionally, developmentally regulated transcription factor which binds and recognizes the enhancer DNA sequence 5'-TGA[CG]TCA-3'. In terms of biological role, plays a role the development of the reproductive system, controlling events including anchor cell (AC) fusion and invasion. Regulates downstream transcriptional targets, including zmp-1, cdh-3, him-4 and mig10b, to promote the removal of the gonadal basement membrane during AC invasion. Regulates aff-1 expression to promote AC fusion. With jun-1 regulates egl-1 and lin-12 expression to allow uterine cell specification and development. Its function is as follows. Required for ovulation. Controls plc-1 expression in the spermatheca to regulate spermathecal valve dilation. Acts with hda-1 as a downstream repressor of the kgb-1 mediated stress response pathway that transcriptionally represses genes involved in the response to heavy metals, such as kreg-1. This is Transcription factor fos-1 from Caenorhabditis elegans.